Here is a 124-residue protein sequence, read N- to C-terminus: Small ribosomal subunit protein bS6 (124 aa).

A disordered region spans residues 99-124 (PLPAPRVMPGSEAAQQQQAEAAASAD). Low complexity predominate over residues 109 to 124 (SEAAQQQQAEAAASAD).

Belongs to the bacterial ribosomal protein bS6 family.

In terms of biological role, binds together with bS18 to 16S ribosomal RNA. This is Small ribosomal subunit protein bS6 from Synechococcus sp. (strain CC9605).